A 584-amino-acid polypeptide reads, in one-letter code: ATP-dependent ubiquitin transferase-like protein Cap2 (584 aa).

The tract at residues 1–137 is E2-like domain; it reads MKQELHHTLL…SGTSNDVELE (137 aa). Cys-90 functions as the For E2-like domain in the catalytic mechanism. The linker domain stretch occupies residues 138–338; the sequence is GEFSAYWQSE…LLSRNQSRPD (201 aa). An adenylation plus E1-like domain region spans residues 339-584; it reads VGNLSQKRIA…RFSGCNICDE (246 aa). Residue Cys-522 is the For E1-like domain of the active site.

The protein in the C-terminal section; belongs to the HesA/MoeB/ThiF family. Interacts with CD-NTase DncV in the presence and absence of phage T2. A Cap2 dimer is bound on either side by a DncV monomer.

In terms of biological role, CD-NTase priming component of a CBASS antiviral system. CBASS (cyclic oligonucleotide-based antiphage signaling system) provides immunity against bacteriophages. The CD-NTase protein (DncV) synthesizes cyclic nucleotides in response to infection; these serve as specific second messenger signals. The signals activate a diverse range of effectors, leading to bacterial cell death and thus abortive phage infection. A type II-A(GA) CBASS system. Its function is as follows. Primes DncV; acts as a protein transferase, conjugating DncV, the CD-NTase, to unidentified target(s) in the cell via an E1-E2 ubiquitin transferase-like mechanism. During the conjugation reaction DncV is probably transiently attached to AMP. Protein conjugation requires ATP. Protects E.coli against phage infection. When the CBASS operon (capV-dncV-cap2-cap3) is introduced in E.coli MG1655 there is about 100-fold protection against phages P1 and T2. When the operon is introduced in E.coli MG1655 there is a more than 10(3) decrease in the efficiency of T2 plaque formation. Protects 100-fold against phage T5, offers no protection against T7. When the operon is introduced in E.coli MG1655 it protects against phages T2, T4, T5 and T6. Another paper shows the operon confers protection against phages P1, T2, T5 and T6 but not T4 or lambda. The polypeptide is ATP-dependent ubiquitin transferase-like protein Cap2 (Vibrio cholerae serotype O1 (strain ATCC 39315 / El Tor Inaba N16961)).